The primary structure comprises 492 residues: MSIPGTNASSSQASNPLNSPVTIPAVMFIFGVVGNLVAIVVLCKSRKEQKETTFYTLVCGLAVTDLLGTLLVSPVTIATYLKGQWPGGHALCEYSTFILLFFGLSGLSIICAMSIERYLAINHAYFYSHYVDKRLAGLTLFAVYASNVLFCALPSMGLGSSRLQYPATWCFIDWTTNVTAHAAFSYMYAGFSSFLILATVLCNVLVCGALLRMHRQFMRRTSLGTEQQHHAAAAAVALAPTACRAPPAASSPALPRLSDFRRRRSFRRIAGAEIQMVILLIATSLVVLICSIPLVVRVFVNQLYRPQLEPVIGKNPDLQAIRIASVSPILDPWIYILLRKTVLSKAIEKIKCLFCRIGGSRRERSGPHCSDSRRTSSAVSGHSRSFLSRELKEISSTSQTLLYTPELSENGLGGGRNLLPGVPGVGLTQIDSTSLRTLRISETSDSSQGQDSESFLLVDEVGGSCRAGPAPKGSSLQVTFPSETLNLSEKCI.

The Extracellular portion of the chain corresponds to 1-19 (MSIPGTNASSSQASNPLNS). N-linked (GlcNAc...) asparagine glycosylation occurs at asparagine 7. Residues 20–43 (PVTIPAVMFIFGVVGNLVAIVVLC) form a helical membrane-spanning segment. At 44–55 (KSRKEQKETTFY) the chain is on the cytoplasmic side. Residues 56-79 (TLVCGLAVTDLLGTLLVSPVTIAT) traverse the membrane as a helical segment. The Extracellular segment spans residues 80–96 (YLKGQWPGGHALCEYST). Cysteine 92 and cysteine 170 form a disulfide bridge. The helical transmembrane segment at 97–115 (FILLFFGLSGLSIICAMSI) threads the bilayer. At 116-135 (ERYLAINHAYFYSHYVDKRL) the chain is on the cytoplasmic side. Residues 136–160 (AGLTLFAVYASNVLFCALPSMGLGS) traverse the membrane as a helical segment. The Extracellular portion of the chain corresponds to 161–184 (SRLQYPATWCFIDWTTNVTAHAAF). Residues 185–211 (SYMYAGFSSFLILATVLCNVLVCGALL) traverse the membrane as a helical segment. Residues 212-273 (RMHRQFMRRT…RSFRRIAGAE (62 aa)) lie on the Cytoplasmic side of the membrane. A helical transmembrane segment spans residues 274–301 (IQMVILLIATSLVVLICSIPLVVRVFVN). Topologically, residues 302-318 (QLYRPQLEPVIGKNPDL) are extracellular. The chain crosses the membrane as a helical span at residues 319-338 (QAIRIASVSPILDPWIYILL). Topologically, residues 339–492 (RKTVLSKAIE…ETLNLSEKCI (154 aa)) are cytoplasmic. Positions 361 to 374 (RRERSGPHCSDSRR) are enriched in basic and acidic residues. Residues 361 to 383 (RRERSGPHCSDSRRTSSAVSGHS) are disordered. Phosphoserine is present on residues serine 380, serine 383, serine 385, and serine 388.

It belongs to the G-protein coupled receptor 1 family. In terms of assembly, interacts with FEM1A. Post-translationally, phosphorylation mediates agonist-mediated desensitization by promoting cytoplasmic retention.

It localises to the cell membrane. Its function is as follows. Receptor for prostaglandin E2 (PGE2). The activity of this receptor is mediated by G(s) proteins that stimulate adenylate cyclase. Has a relaxing effect on smooth muscle. May play an important role in regulating renal hemodynamics, intestinal epithelial transport, adrenal aldosterone secretion, and uterine function. The sequence is that of Prostaglandin E2 receptor EP4 subtype (PTGER4) from Bos taurus (Bovine).